A 258-amino-acid chain; its full sequence is Thiazole synthase 2 (258 aa).

K97 (schiff-base intermediate with DXP) is an active-site residue. 1-deoxy-D-xylulose 5-phosphate-binding positions include G158, 184–185, and 206–207; these read AG and NT.

The protein belongs to the ThiG family. Homotetramer. Forms heterodimers with either ThiH or ThiS.

The protein resides in the cytoplasm. It catalyses the reaction [ThiS sulfur-carrier protein]-C-terminal-Gly-aminoethanethioate + 2-iminoacetate + 1-deoxy-D-xylulose 5-phosphate = [ThiS sulfur-carrier protein]-C-terminal Gly-Gly + 2-[(2R,5Z)-2-carboxy-4-methylthiazol-5(2H)-ylidene]ethyl phosphate + 2 H2O + H(+). Its pathway is cofactor biosynthesis; thiamine diphosphate biosynthesis. Catalyzes the rearrangement of 1-deoxy-D-xylulose 5-phosphate (DXP) to produce the thiazole phosphate moiety of thiamine. Sulfur is provided by the thiocarboxylate moiety of the carrier protein ThiS. In vitro, sulfur can be provided by H(2)S. The protein is Thiazole synthase 2 of Syntrophotalea carbinolica (strain DSM 2380 / NBRC 103641 / GraBd1) (Pelobacter carbinolicus).